Reading from the N-terminus, the 427-residue chain is Terminal nucleotidyltransferase 5B (427 aa).

The span at 1–11 (MMPSESGDESL) shows a compositional bias: acidic residues. The disordered stretch occupies residues 1-46 (MMPSESGDESLEQPAAQVGTGAASAVATAGAAGGGPDLEASSASLG). Over residues 15 to 30 (AAQVGTGAASAVATAG) the composition is skewed to low complexity.

This sequence belongs to the TENT family.

It localises to the cytoplasm. It is found in the nucleus. It carries out the reaction RNA(n) + ATP = RNA(n)-3'-adenine ribonucleotide + diphosphate. Functionally, catalyzes the transfer of one adenosine molecule from an ATP to an mRNA poly(A) tail bearing a 3'-OH terminal group in an ATP hydrolysis-dependent manner. May be involved in maintaining the translation efficiency of at least some genes through preventing degradation of their mRNAs. Prefers RNA molecules that are adenosine-rich close to 3'-end. In addition, may inhibit cell proliferation and cell cycle progression through ubiquitination of beta-catenin/CTNNB1. This chain is Terminal nucleotidyltransferase 5B, found in Rattus norvegicus (Rat).